The primary structure comprises 140 residues: MADVPGYLRTCLDMGKIAFLAILVSTGIVLQILACALFNNWWPMLSVIMYVLLPMPLLFFGGSDSTSLFNESDNSWINAAKFLTGASAVGSVAIPSILKHAGLIGWGALALDLSSYVVFLVAILGYICIGDASDNYYSYI.

Topologically, residues Met1–Lys16 are cytoplasmic. The helical transmembrane segment at Ile17–Leu37 threads the bilayer. The Lumenal portion of the chain corresponds to Phe38–Asn40. Residues Trp41–Gly61 form a helical membrane-spanning segment. The Cytoplasmic portion of the chain corresponds to Gly62 to Ser75. A helical membrane pass occupies residues Trp76 to Leu98. The Lumenal segment spans residues Lys99–Ala108. Residues Leu109–Ile129 traverse the membrane as a helical segment. Residues Gly130–Ile140 are Cytoplasmic-facing.

The protein belongs to the OB-RGRP/VPS55 family.

Its subcellular location is the endosome membrane. Involved in endosomal protein transport. The chain is Vacuolar protein sorting-associated protein 55 homolog from Arabidopsis thaliana (Mouse-ear cress).